Here is a 240-residue protein sequence, read N- to C-terminus: MTESQETPITEDGEARPHRRIKSFVMRAGRMTEGQQRGLEQGGPLFILPLADSPVDYDQVFGRSAPRTLEIGFGMGHSLLEMAAAAPELDFIGVEVHRPGVGALLNGVLTQGLKNLRVYDCDAIEVLNRCVADNSLDRLMLFFPDPWHKARHHKRRIVQPEFAELVRRKLKVGGVFHMATDWEPYAEHMLEVMKVAPGYRNQAADGAYVPRPEERPITKFERRGERLGHGVWDLKFEKVD.

Glu70, Glu95, Asp122, and Asp145 together coordinate S-adenosyl-L-methionine. Residue Asp145 is part of the active site. Residues Lys149, Asp181, and 218–221 each bind substrate; that span reads TKFE.

Belongs to the class I-like SAM-binding methyltransferase superfamily. TrmB family.

The catalysed reaction is guanosine(46) in tRNA + S-adenosyl-L-methionine = N(7)-methylguanosine(46) in tRNA + S-adenosyl-L-homocysteine. Its pathway is tRNA modification; N(7)-methylguanine-tRNA biosynthesis. Its function is as follows. Catalyzes the formation of N(7)-methylguanine at position 46 (m7G46) in tRNA. The protein is tRNA (guanine-N(7)-)-methyltransferase of Pseudomonas entomophila (strain L48).